The sequence spans 319 residues: ATP-dependent 6-phosphofructokinase (319 aa).

An ATP-binding site is contributed by glycine 11. Arginine 21–arginine 25 lines the ADP pocket. ATP contacts are provided by residues arginine 72–cysteine 73 and glycine 102–serine 105. Aspartate 103 contributes to the Mg(2+) binding site. Substrate is bound at residue threonine 125 to aspartate 127. Residue aspartate 127 is the Proton acceptor of the active site. ADP is bound at residue arginine 154. Substrate-binding positions include arginine 162 and methionine 169–arginine 171. ADP-binding positions include glycine 185–glutamate 187, arginine 211, and lysine 213–histidine 215. Substrate is bound by residues glutamate 222, arginine 243, and histidine 249 to arginine 252.

This sequence belongs to the phosphofructokinase type A (PFKA) family. ATP-dependent PFK group I subfamily. Prokaryotic clade 'B1' sub-subfamily. Homotetramer. Mg(2+) is required as a cofactor.

Its subcellular location is the cytoplasm. It carries out the reaction beta-D-fructose 6-phosphate + ATP = beta-D-fructose 1,6-bisphosphate + ADP + H(+). Its pathway is carbohydrate degradation; glycolysis; D-glyceraldehyde 3-phosphate and glycerone phosphate from D-glucose: step 3/4. Its activity is regulated as follows. Allosterically activated by ADP and other diphosphonucleosides, and allosterically inhibited by phosphoenolpyruvate. Functionally, catalyzes the phosphorylation of D-fructose 6-phosphate to fructose 1,6-bisphosphate by ATP, the first committing step of glycolysis. The protein is ATP-dependent 6-phosphofructokinase of Geobacillus kaustophilus (strain HTA426).